The following is a 139-amino-acid chain: Large ribosomal subunit protein uL16 (139 aa).

It belongs to the universal ribosomal protein uL16 family. As to quaternary structure, part of the 50S ribosomal subunit.

Its function is as follows. Binds 23S rRNA and is also seen to make contacts with the A and possibly P site tRNAs. The sequence is that of Large ribosomal subunit protein uL16 from Chlorobium phaeobacteroides (strain DSM 266 / SMG 266 / 2430).